The chain runs to 161 residues: RNA pyrophosphohydrolase (161 aa).

The region spanning 9-155 is the Nudix hydrolase domain; it reads PYRPCVGVML…KRRVYRQVVD (147 aa). The short motif at 44 to 65 is the Nudix box element; sequence GGIDDGEELHPAALRELSEETG.

The protein belongs to the Nudix hydrolase family. RppH subfamily. It depends on a divalent metal cation as a cofactor.

In terms of biological role, accelerates the degradation of transcripts by removing pyrophosphate from the 5'-end of triphosphorylated RNA, leading to a more labile monophosphorylated state that can stimulate subsequent ribonuclease cleavage. This is RNA pyrophosphohydrolase from Novosphingobium aromaticivorans (strain ATCC 700278 / DSM 12444 / CCUG 56034 / CIP 105152 / NBRC 16084 / F199).